A 449-amino-acid chain; its full sequence is Chromosomal replication initiator protein DnaA (449 aa).

Residues 1 to 75 (MDTNNDIEKR…EILSQNKVGM (75 aa)) form a domain I, interacts with DnaA modulators region. Residues 75–106 (MHLAHSVDVRIEVASKVHVSDHSNINYKATKS) form a domain II region. A domain III, AAA+ region region spans residues 107–321 (SIKDSYTFEN…GAIIKISVNA (215 aa)). ATP-binding residues include glycine 151, glycine 153, lysine 154, and threonine 155. Residues 322-449 (NLMNAPIDLN…LNELNDKKQH (128 aa)) form a domain IV, binds dsDNA region.

It belongs to the DnaA family. In terms of assembly, oligomerizes as a right-handed, spiral filament on DNA at oriC.

It is found in the cytoplasm. Plays an essential role in the initiation and regulation of chromosomal replication. ATP-DnaA binds to the origin of replication (oriC) to initiate formation of the DNA replication initiation complex once per cell cycle. Binds the DnaA box (a 9 base pair repeat at the origin) and separates the double-stranded (ds)DNA. Forms a right-handed helical filament on oriC DNA; dsDNA binds to the exterior of the filament while single-stranded (ss)DNA is stabiized in the filament's interior. The ATP-DnaA-oriC complex binds and stabilizes one strand of the AT-rich DNA unwinding element (DUE), permitting loading of DNA polymerase. After initiation quickly degrades to an ADP-DnaA complex that is not apt for DNA replication. Binds acidic phospholipids. This Helicobacter acinonychis (strain Sheeba) protein is Chromosomal replication initiator protein DnaA.